A 225-amino-acid polypeptide reads, in one-letter code: Imidazole glycerol phosphate synthase subunit HisH (225 aa).

The region spanning 3–225 is the Glutamine amidotransferase type-1 domain; sequence TIAIVDYGMG…LYRNFVDWQP (223 aa). The active-site Nucleophile is Cys-82. Catalysis depends on residues His-205 and Glu-207.

In terms of assembly, heterodimer of HisH and HisF.

It localises to the cytoplasm. The enzyme catalyses 5-[(5-phospho-1-deoxy-D-ribulos-1-ylimino)methylamino]-1-(5-phospho-beta-D-ribosyl)imidazole-4-carboxamide + L-glutamine = D-erythro-1-(imidazol-4-yl)glycerol 3-phosphate + 5-amino-1-(5-phospho-beta-D-ribosyl)imidazole-4-carboxamide + L-glutamate + H(+). It carries out the reaction L-glutamine + H2O = L-glutamate + NH4(+). It functions in the pathway amino-acid biosynthesis; L-histidine biosynthesis; L-histidine from 5-phospho-alpha-D-ribose 1-diphosphate: step 5/9. Functionally, IGPS catalyzes the conversion of PRFAR and glutamine to IGP, AICAR and glutamate. The HisH subunit catalyzes the hydrolysis of glutamine to glutamate and ammonia as part of the synthesis of IGP and AICAR. The resulting ammonia molecule is channeled to the active site of HisF. The chain is Imidazole glycerol phosphate synthase subunit HisH from Bordetella pertussis (strain Tohama I / ATCC BAA-589 / NCTC 13251).